Consider the following 149-residue polypeptide: MHCPFCSATDTKVIDSRLVAEGHQVRRRRECTECHERFTTFEGAELVMPRVIKRDGSRQPFDEEKLQSGMLRAVEKRPVSMDEIEQALSKIKSTLRATGEREVPSEMVGNLMMEQLMNLDKVAYIRFASVYRAFEDVSEFGEAIAKLQK.

The segment at 3–34 is a zinc-finger region; that stretch reads CPFCSATDTKVIDSRLVAEGHQVRRRRECTEC. Residues 49–139 enclose the ATP-cone domain; sequence PRVIKRDGSR…VYRAFEDVSE (91 aa).

Belongs to the NrdR family. The cofactor is Zn(2+).

In terms of biological role, negatively regulates transcription of bacterial ribonucleotide reductase nrd genes and operons by binding to NrdR-boxes. The chain is Transcriptional repressor NrdR from Shewanella putrefaciens (strain CN-32 / ATCC BAA-453).